The following is a 639-amino-acid chain: Chaperone protein DnaK (639 aa).

Threonine 198 carries the phosphothreonine; by autocatalysis modification. The interval 601 to 639 is disordered; that stretch reads AQQAPGADSCGGDCGQQQEAGAKPKDEKVVDADFEEVKK. Residues 622-639 show a composition bias toward basic and acidic residues; sequence AKPKDEKVVDADFEEVKK.

It belongs to the heat shock protein 70 family.

In terms of biological role, acts as a chaperone. The sequence is that of Chaperone protein DnaK from Trichlorobacter lovleyi (strain ATCC BAA-1151 / DSM 17278 / SZ) (Geobacter lovleyi).